The primary structure comprises 387 residues: Paralemmin-1 (387 aa).

Methionine 1 is subject to N-acetylmethionine. Residues 9 to 101 adopt a coiled-coil conformation; that stretch reads TSQQERLQAI…EKEIEVLERG (93 aa). Basic and acidic residues-rich tracts occupy residues 31 to 41 and 69 to 102; these read KRRQLEDERRQ and DLRR…ERGD. The interval 31-160 is disordered; that stretch reads KRRQLEDERR…VSNTPLRTVD (130 aa). The span at 104 to 117 shows a compositional bias: low complexity; the sequence is APATAKENAAAPSP. Residues serine 116 and serine 124 each carry the phosphoserine modification. Residues threonine 141 and threonine 145 each carry the phosphothreonine modification. Phosphoserine is present on serine 162. Threonine 243 carries the phosphothreonine modification. Serine 245 is modified (phosphoserine). 2 disordered regions span residues 247-296 and 335-378; these read AGST…GQEP and AEPK…DMKK. Residues 286-296 are compositionally biased toward low complexity; that stretch reads GPPGIQPGQEP. Serine 346 is subject to Phosphoserine. Threonine 367 carries the post-translational modification Phosphothreonine. Position 369 is a phosphoserine (serine 369). 2 S-palmitoyl cysteine lipidation sites follow: cysteine 381 and cysteine 383. The residue at position 384 (cysteine 384) is a Cysteine methyl ester. The S-farnesyl cysteine moiety is linked to residue cysteine 384. A propeptide spans 385-387 (removed in mature form); sequence SIM.

Belongs to the paralemmin family. In terms of assembly, interacts with dopamine receptor DRD3. Widely expressed with highest expression in brain and testis and intermediate expression in heart and adrenal gland.

It localises to the cell membrane. The protein localises to the cell projection. Its subcellular location is the filopodium membrane. The protein resides in the axon. It is found in the dendrite. It localises to the dendritic spine. The protein localises to the basolateral cell membrane. Its subcellular location is the apicolateral cell membrane. Its function is as follows. Involved in plasma membrane dynamics and cell process formation. Isoform 1 and isoform 2 are necessary for axonal and dendritic filopodia induction, for dendritic spine maturation and synapse formation in a palmitoylation-dependent manner. This Homo sapiens (Human) protein is Paralemmin-1 (PALM).